Consider the following 147-residue polypeptide: Hordoindoline-B1 (147 aa).

The N-terminal stretch at 1–19 (MKTLFLLAILALVASTTFA) is a signal peptide. A propeptide spanning residues 20-28 (QYSVGGGYN) is cleaved from the precursor.

In terms of processing, five disulfide bonds are present. Found in endosperm and aleurone layer of developing kernels, but not in the embryo.

It localises to the membrane. The protein resides in the secreted. It is found in the extracellular space. Acts as a membranotoxin, probably through its antibacterial and antifungal activities, contributing to the defense mechanism of the plant against predators. Forms monovalent cation-selective ion channels in membranes. Contributes to grain texture and hardness. The polypeptide is Hordoindoline-B1 (HINB-1) (Hordeum vulgare (Barley)).